A 963-amino-acid polypeptide reads, in one-letter code: VPS35 endosomal protein-sorting factor-like (963 aa).

The disordered stretch occupies residues 43 to 112; it reads SKTKKVSRKG…DKDENSFVGP (70 aa). Positions 51–72 are enriched in low complexity; sequence KGSTSSTSSSSSSSVIDPLSSV. Ser265 carries the post-translational modification Phosphoserine. A helical transmembrane segment spans residues 699–719; sequence AFVRACVAYCFITIPSLVGIF.

Belongs to the VPS35L family. Component of the heterotrimeric retriever complex formed by VPS26C, VPS29 and VPS35L. Interacts with VPS29. Interacts with COMMD1, CCDC93 and CCDC22; associates with the CCC (COMMD/CCDC22/CCDC93) complex which contains at least COMMD1 (and possibly other COMM domain-containing proteins), CCDC22 and CCDC93. Interacts with WASHC1, WASHC2A and WASHC2C. Interacts with SNX17 and SNX31.

The protein localises to the membrane. Its subcellular location is the endosome. Functionally, acts as a component of the retriever complex. The retriever complex is a heterotrimeric complex related to retromer cargo-selective complex (CSC) and essential for retromer-independent retrieval and recycling of numerous cargos such as integrin alpha-5/beta-1 (ITGA5:ITGB1). The recruitment of the retriever complex to the endosomal membrane involves CCC and WASH complexes. In the endosomes, drives the retrieval and recycling of NxxY-motif-containing cargo proteins by coupling to SNX17, a cargo essential for the homeostatic maintenance of numerous cell surface proteins associated with processes that include cell migration, cell adhesion, nutrient supply and cell signaling. Involved in copper-dependent ATP7A trafficking between the trans-Golgi network and vesicles in the cell periphery; the function is proposed to depend on its association with the CCC complex and cooperation with the WASH complex on early endosomes. Seems not to be required for CCC complex stability. The chain is VPS35 endosomal protein-sorting factor-like from Mus musculus (Mouse).